Reading from the N-terminus, the 122-residue chain is Large ribosomal subunit protein uL18 (122 aa).

The span at 1 to 19 (MSKLSRKQQTQKRHKRLRR) shows a compositional bias: basic residues. Positions 1-27 (MSKLSRKQQTQKRHKRLRRNLSGTESR) are disordered.

The protein belongs to the universal ribosomal protein uL18 family. In terms of assembly, part of the 50S ribosomal subunit; part of the 5S rRNA/L5/L18/L25 subcomplex. Contacts the 5S and 23S rRNAs.

Functionally, this is one of the proteins that bind and probably mediate the attachment of the 5S RNA into the large ribosomal subunit, where it forms part of the central protuberance. The chain is Large ribosomal subunit protein uL18 from Prochlorococcus marinus (strain NATL1A).